Here is a 308-residue protein sequence, read N- to C-terminus: F-actin-capping protein subunit alpha (308 aa).

This sequence belongs to the F-actin-capping protein alpha subunit family. Component of the F-actin capping complex, composed of a heterodimer of an alpha and a beta subunit.

Its function is as follows. F-actin-capping proteins bind in a Ca(2+)-independent manner to the fast growing ends of actin filaments (barbed end) thereby blocking the exchange of subunits at these ends. Unlike other capping proteins (such as gelsolin and severin), these proteins do not sever actin filaments. The polypeptide is F-actin-capping protein subunit alpha (Arabidopsis thaliana (Mouse-ear cress)).